A 259-amino-acid polypeptide reads, in one-letter code: Acetylglutamate kinase (259 aa).

Substrate contacts are provided by residues 45-46, Arg-67, and Asn-159; that span reads GG.

This sequence belongs to the acetylglutamate kinase family. ArgB subfamily.

It is found in the cytoplasm. The enzyme catalyses N-acetyl-L-glutamate + ATP = N-acetyl-L-glutamyl 5-phosphate + ADP. The protein operates within amino-acid biosynthesis; L-arginine biosynthesis; N(2)-acetyl-L-ornithine from L-glutamate: step 2/4. In terms of biological role, catalyzes the ATP-dependent phosphorylation of N-acetyl-L-glutamate. The sequence is that of Acetylglutamate kinase from Aeromonas hydrophila subsp. hydrophila (strain ATCC 7966 / DSM 30187 / BCRC 13018 / CCUG 14551 / JCM 1027 / KCTC 2358 / NCIMB 9240 / NCTC 8049).